Reading from the N-terminus, the 549-residue chain is Probable glucuronosyltransferase Os01g0157700 (549 aa).

Over 1-16 the chain is Cytoplasmic; that stretch reads MDSEERSKKRLRLWSR. A helical; Signal-anchor for type II membrane protein transmembrane segment spans residues 17-37; sequence AVVHFSLCFAIGVFAALLPLA. At 38 to 549 the chain is on the lumenal side; the sequence is ATGATSIDSI…TPEEGKTKEG (512 aa). N-linked (GlcNAc...) asparagine glycans are attached at residues asparagine 112, asparagine 139, asparagine 214, asparagine 229, asparagine 240, asparagine 251, asparagine 264, asparagine 269, and asparagine 300. The interval 232–252 is disordered; that stretch reads ETTWDSSSNTTQTTWDSSSNK. Positions 350–363 are enriched in basic and acidic residues; that stretch reads IEQATPEKESLTKG. Disordered stretches follow at residues 350 to 371, 413 to 432, and 441 to 524; these read IEQATPEKESLTKGDEEESHDM, EQETPEKENLTKGEEKESHD, and KIEE…KETH. Asparagine 421 and asparagine 452 each carry an N-linked (GlcNAc...) asparagine glycan. 3 stretches are compositionally biased toward basic and acidic residues: residues 441 to 465, 472 to 496, and 503 to 524; these read KIEEQETPEKENLTKGDEKESHDMM, KIDEQETTEKESLTKGDEKESHDMM, and KIEEQETPEKESLTKGDEKETH.

This sequence belongs to the glycosyltransferase 43 family.

The protein localises to the golgi apparatus membrane. Involved in the synthesis of glucuronoxylan hemicellulose in secondary cell walls. This Oryza sativa subsp. japonica (Rice) protein is Probable glucuronosyltransferase Os01g0157700.